The sequence spans 562 residues: Scaffold protein FimL (562 aa).

In terms of assembly, interacts with PilG and FimV.

The protein localises to the cytoplasm. Its function is as follows. Regulates multiple virulence functions including type IV pilus (T4P)-mediated assembly and twitching motility as well as cAMP-dependent virulence gene expression. Regulates intracellular cyclic AMP (cAMP) levels through the activation of adenylate cyclase CyaB. Also functions as a scaffold linking FimV and PilG at the pole, where type IV pilus (T4P), the Chp chemosensory system and the CyaB adenylate cyclase interact. The protein is Scaffold protein FimL (fimL) of Pseudomonas aeruginosa (strain ATCC 15692 / DSM 22644 / CIP 104116 / JCM 14847 / LMG 12228 / 1C / PRS 101 / PAO1).